Here is a 469-residue protein sequence, read N- to C-terminus: Serine hydroxymethyltransferase, cytosolic (469 aa).

T20 is modified (phosphothreonine). S26 is modified (phosphoserine). The residue at position 248 (K248) is an N6-(pyridoxal phosphate)lysine. At S429 the chain carries Phosphoserine. K456 is covalently cross-linked (Glycyl lysine isopeptide (Lys-Gly) (interchain with G-Cter in ubiquitin)).

The protein belongs to the SHMT family. In terms of assembly, homotetramer. Requires pyridoxal 5'-phosphate as cofactor.

Its subcellular location is the cytoplasm. The catalysed reaction is (6R)-5,10-methylene-5,6,7,8-tetrahydrofolate + glycine + H2O = (6S)-5,6,7,8-tetrahydrofolate + L-serine. The protein operates within one-carbon metabolism; tetrahydrofolate interconversion. Interconversion of serine and glycine. This Saccharomyces cerevisiae (strain ATCC 204508 / S288c) (Baker's yeast) protein is Serine hydroxymethyltransferase, cytosolic.